Here is a 397-residue protein sequence, read N- to C-terminus: Cathepsin E (397 aa).

The N-terminal stretch at 1–16 (MKQFLVVLLILSFVHG) is a signal peptide. A propeptide spans 17 to 49 (IIRVPLKRQKSMRKILKEKGKLSHLWTKQGNEF) (activation peptide). The Peptidase A1 domain maps to 74-385 (YFGQISIGTP…DRGNNRVGFA (312 aa)). Aspartate 92 is a catalytic residue. The cysteines at positions 105 and 110 are disulfide-linked. A glycan (N-linked (GlcNAc...) asparagine) is linked at asparagine 139. Cysteine 268 and cysteine 272 form a disulfide bridge. Aspartate 277 is an active-site residue. Cysteine 310 and cysteine 344 are disulfide-bonded.

The protein belongs to the peptidase A1 family. Homodimer; disulfide-linked. In terms of processing, glycosylated. Contains high mannose-type oligosaccharide. In terms of tissue distribution, found in the larval foregut and adult stomach.

Its subcellular location is the endosome. It catalyses the reaction Similar to cathepsin D, but slightly broader specificity.. May have a role in immune function. Probably involved in the processing of antigenic peptides during MHC class II-mediated antigen presentation. This Aquarana catesbeiana (American bullfrog) protein is Cathepsin E (CTSE).